The sequence spans 138 residues: uncharacterized protein (138 aa).

Residues 1 to 35 (MVAPAARVFLRAVRAALTSTVPDLLCLLARGSPRG) form the signal peptide.

In terms of tissue distribution, isoform 1 is highly expressed in small intestine, testis and kidney, medium expressed in brain and heart and low expressed in colon; it could not be detected in liver, adrenal gland and pancreas.

It localises to the secreted. This is an uncharacterized protein from Homo sapiens (Human).